A 606-amino-acid polypeptide reads, in one-letter code: Glutamine--fructose-6-phosphate aminotransferase [isomerizing] (606 aa).

Residue Cys2 is the Nucleophile; for GATase activity of the active site. In terms of domain architecture, Glutamine amidotransferase type-2 spans 2-218 (CGIFGYLGEK…SGELAVLRIG (217 aa)). 2 consecutive SIS domains span residues 278–424 (FTES…HRQV) and 448–596 (LDSS…VDRP). The active-site For Fru-6P isomerization activity is the Lys601.

In terms of assembly, homodimer.

It localises to the cytoplasm. The catalysed reaction is D-fructose 6-phosphate + L-glutamine = D-glucosamine 6-phosphate + L-glutamate. In terms of biological role, catalyzes the first step in hexosamine metabolism, converting fructose-6P into glucosamine-6P using glutamine as a nitrogen source. The protein is Glutamine--fructose-6-phosphate aminotransferase [isomerizing] of Chlamydia trachomatis serovar D (strain ATCC VR-885 / DSM 19411 / UW-3/Cx).